Consider the following 487-residue polypeptide: 26S proteasome non-ATPase regulatory subunit 3 homolog B (487 aa).

The disordered stretch occupies residues M1–P21. The segment covering N10–P21 has biased composition (polar residues). Positions C239–D420 constitute a PCI domain. The segment at P452–F487 is disordered. Over residues T455–A480 the composition is skewed to basic and acidic residues.

Belongs to the proteasome subunit S3 family. In terms of assembly, component of the 19S regulatory particle (RP/PA700) lid subcomplex of the 26S proteasome. The 26S proteasome is composed of a core protease (CP), known as the 20S proteasome, capped at one or both ends by the 19S regulatory particle (RP/PA700). The RP/PA700 complex is composed of at least 17 different subunits in two subcomplexes, the base and the lid, which form the portions proximal and distal to the 20S proteolytic core, respectively. Interacts with UCH1 and UCH2. In terms of tissue distribution, preferentially expressed in flowers.

Acts as a regulatory subunit of the 26 proteasome which is involved in the ATP-dependent degradation of ubiquitinated proteins. The polypeptide is 26S proteasome non-ATPase regulatory subunit 3 homolog B (Arabidopsis thaliana (Mouse-ear cress)).